The sequence spans 142 residues: Large ribosomal subunit protein uL11 (142 aa).

This sequence belongs to the universal ribosomal protein uL11 family. As to quaternary structure, part of the ribosomal stalk of the 50S ribosomal subunit. Interacts with L10 and the large rRNA to form the base of the stalk. L10 forms an elongated spine to which L12 dimers bind in a sequential fashion forming a multimeric L10(L12)X complex. One or more lysine residues are methylated.

Forms part of the ribosomal stalk which helps the ribosome interact with GTP-bound translation factors. This chain is Large ribosomal subunit protein uL11, found in Photobacterium profundum (strain SS9).